An 89-amino-acid chain; its full sequence is Small ribosomal subunit protein uS15 (89 aa).

The protein belongs to the universal ribosomal protein uS15 family. In terms of assembly, part of the 30S ribosomal subunit. Forms a bridge to the 50S subunit in the 70S ribosome, contacting the 23S rRNA.

Functionally, one of the primary rRNA binding proteins, it binds directly to 16S rRNA where it helps nucleate assembly of the platform of the 30S subunit by binding and bridging several RNA helices of the 16S rRNA. Forms an intersubunit bridge (bridge B4) with the 23S rRNA of the 50S subunit in the ribosome. The chain is Small ribosomal subunit protein uS15 from Bartonella tribocorum (strain CIP 105476 / IBS 506).